The primary structure comprises 141 residues: Hemoglobin subunit alpha (141 aa).

Residues 1-141 (VLSSADKTNI…VSTVLTSKYR (141 aa)) enclose the Globin domain. Position 3 is a phosphoserine (Ser-3). Residue Lys-7 is modified to N6-succinyllysine. The residue at position 8 (Thr-8) is a Phosphothreonine. Residue Lys-11 is modified to N6-succinyllysine. Lys-16 is modified (N6-acetyllysine; alternate). Position 16 is an N6-succinyllysine; alternate (Lys-16). The residue at position 24 (Tyr-24) is a Phosphotyrosine. At Ser-35 the chain carries Phosphoserine. Lys-40 is modified (N6-succinyllysine). Residue Ser-49 is modified to Phosphoserine. His-58 lines the O2 pocket. His-87 lines the heme b pocket. Ser-102 carries the phosphoserine modification. Thr-108 is subject to Phosphothreonine. Phosphoserine occurs at positions 124 and 131. Residues Thr-134 and Thr-137 each carry the phosphothreonine modification. Ser-138 bears the Phosphoserine mark.

The protein belongs to the globin family. In terms of assembly, heterotetramer of two alpha chains and two beta chains. In terms of tissue distribution, red blood cells.

Involved in oxygen transport from the lung to the various peripheral tissues. Functionally, hemopressin acts as an antagonist peptide of the cannabinoid receptor CNR1. Hemopressin-binding efficiently blocks cannabinoid receptor CNR1 and subsequent signaling. This is Hemoglobin subunit alpha (HBA) from Rousettus aegyptiacus (Egyptian fruit bat).